The chain runs to 231 residues: NADH-ubiquinone oxidoreductase chain 4 (231 aa).

7 helical membrane-spanning segments follow: residues 1–21, 34–54, 63–85, 89–111, 128–148, 156–176, and 211–231; these read PIAG…YGII, LFLP…LTCL, IAYS…TPWG, AMAL…NTTY, ILPM…AIPP, LLIM…LGLS, and LLIA…ELVI.

Belongs to the complex I subunit 4 family.

It localises to the mitochondrion membrane. The catalysed reaction is a ubiquinone + NADH + 5 H(+)(in) = a ubiquinol + NAD(+) + 4 H(+)(out). In terms of biological role, core subunit of the mitochondrial membrane respiratory chain NADH dehydrogenase (Complex I) that is believed to belong to the minimal assembly required for catalysis. Complex I functions in the transfer of electrons from NADH to the respiratory chain. The immediate electron acceptor for the enzyme is believed to be ubiquinone. This Crotalus adamanteus (Eastern diamondback rattlesnake) protein is NADH-ubiquinone oxidoreductase chain 4 (MT-ND4).